The sequence spans 543 residues: Aspartate/alanine antiporter (543 aa).

The next 10 helical transmembrane spans lie at 4-26 (IGNF…GYLL), 33-55 (SFTL…LGVF), 88-110 (FGAK…AYAC), 117-139 (GPGI…GSSL), 159-178 (IPIV…LIFL), 362-381 (IINY…LGIV), 385-407 (VSGV…VQSI), 428-450 (SIGL…ISAI), 455-477 (ISVL…VICY), and 520-542 (VAPA…IVLL).

This sequence belongs to the AAE transporter (TC 2.A.81) family.

Its subcellular location is the cell membrane. Its function is as follows. Catalyzes the electrogenic exchange of aspartate with alanine. This Tetragenococcus halophilus (Pediococcus halophilus) protein is Aspartate/alanine antiporter (aspT).